A 404-amino-acid chain; its full sequence is DNA replication and repair protein RecF (404 aa).

Position 30–37 (Gly-30–Thr-37) interacts with ATP.

This sequence belongs to the RecF family.

It localises to the cytoplasm. The RecF protein is involved in DNA metabolism; it is required for DNA replication and normal SOS inducibility. RecF binds preferentially to single-stranded, linear DNA. It also seems to bind ATP. This chain is DNA replication and repair protein RecF, found in Clavibacter michiganensis subsp. michiganensis (strain NCPPB 382).